Reading from the N-terminus, the 25-residue chain is C-reactive protein P2 subunit 4 (25 aa).

Residues 1 to 25 (GRSLVFPEETANSFVELFPAKELSL) form the Pentraxin (PTX) domain.

Belongs to the pentraxin family. As to quaternary structure, heteropentamer. Discoid arrangement of 5 non-covalently bound subunits 1, 2, 3 and 4. Ca(2+) is required as a cofactor. Glycosylated.

It localises to the secreted. Functionally, displays several functions associated with host defense: it promotes agglutination, bacterial capsular swelling, phagocytosis, and complement fixation through its calcium-dependent binding to phosphorylcholine. The polypeptide is C-reactive protein P2 subunit 4 (Gadus morhua (Atlantic cod)).